A 339-amino-acid polypeptide reads, in one-letter code: MKALMFKAPLQAVLTERDVPEPAPGEALVKLAYNSICGSDLSFYKGVWHGFTYPVVPGHEWSGTVVEAGGGAADLVGQNVVGDLTVACGSCRHCTVGKPTLCADLQELGFTRDGACAEYMTVPTGNLHRLPEGLSLREATQVEPLAVALNAVDRLAVTAGEKVAITGAGGIGLLLAQAVRLRGAEVTVLAEPVTERRQAAHALGVPHTVGGDPGELVGFVEKHPELTPDVVLEASGYPLAVQEAVEAVRSGGRIGLIGYRIEEAATMAPHHIVVKVLSLQASMGPGDRFGEAIELLAAGAVDVDALLSHEFGLADHDRALDVALRRADGNTRSYFNLRA.

7 residues coordinate Zn(2+): Cys37, His59, Cys88, Cys91, Cys94, Cys102, and Glu143.

This sequence belongs to the zinc-containing alcohol dehydrogenase family. DOIA dehydrogenase subfamily. Zn(2+) is required as a cofactor.

The enzyme catalyses 2-deoxy-scyllo-inosamine + NADP(+) = 3-amino-2,3-dideoxy-scyllo-inosose + NADPH + H(+). It carries out the reaction 2-deoxy-scyllo-inosamine + NAD(+) = 3-amino-2,3-dideoxy-scyllo-inosose + NADH + H(+). Its pathway is metabolic intermediate biosynthesis; 2-deoxystreptamine biosynthesis; 2-deoxystreptamine from D-glucose 6-phosphate: step 3/4. It functions in the pathway antibiotic biosynthesis; paromomycin biosynthesis. Functionally, catalyzes the oxidation of 2-deoxy-scyllo-inosamine (DOIA) with NAD(+) or NADP(+), forming 3-amino-2,3-dideoxy-scyllo-inosose (amino-DOI). This Streptomyces paromomycinus (Streptomyces rimosus subsp. paromomycinus) protein is 2-deoxy-scyllo-inosamine dehydrogenase (parE).